A 186-amino-acid polypeptide reads, in one-letter code: Putative glutathione-dependent formaldehyde-activating enzyme (186 aa).

Residues 20-166 (FSGGKLRCKC…FKSIGLETYD (147 aa)) form the CENP-V/GFA domain. Zn(2+) is bound by residues Cys27, Cys29, Cys48, Cys50, Cys53, Cys95, and Cys98.

It belongs to the Gfa family. It depends on Zn(2+) as a cofactor.

The enzyme catalyses S-(hydroxymethyl)glutathione = glutathione + formaldehyde. Its pathway is one-carbon metabolism; formaldehyde degradation; formate from formaldehyde (glutathione route): step 1/3. Its function is as follows. Catalyzes the condensation of formaldehyde and glutathione to S-hydroxymethylglutathione. The polypeptide is Putative glutathione-dependent formaldehyde-activating enzyme (Fusarium vanettenii (strain ATCC MYA-4622 / CBS 123669 / FGSC 9596 / NRRL 45880 / 77-13-4) (Fusarium solani subsp. pisi)).